Reading from the N-terminus, the 548-residue chain is Chaperonin GroEL (548 aa).

ATP-binding positions include 30–33 (TLGP), lysine 51, 87–91 (DGTTT), glycine 415, 479–481 (NAA), and aspartate 495.

It belongs to the chaperonin (HSP60) family. Forms a cylinder of 14 subunits composed of two heptameric rings stacked back-to-back. Interacts with the co-chaperonin GroES.

Its subcellular location is the cytoplasm. It catalyses the reaction ATP + H2O + a folded polypeptide = ADP + phosphate + an unfolded polypeptide.. Together with its co-chaperonin GroES, plays an essential role in assisting protein folding. The GroEL-GroES system forms a nano-cage that allows encapsulation of the non-native substrate proteins and provides a physical environment optimized to promote and accelerate protein folding. This chain is Chaperonin GroEL, found in Sodalis glossinidius (strain morsitans).